Reading from the N-terminus, the 450-residue chain is tRNA-2-methylthio-N(6)-dimethylallyladenosine synthase (450 aa).

An MTTase N-terminal domain is found at 14–132 (GEFFIETWGC…FPNYLNEVKK (119 aa)). Cys-23, Cys-59, Cys-93, Cys-169, Cys-173, and Cys-176 together coordinate [4Fe-4S] cluster. The Radical SAM core domain maps to 155-385 (RKNSMKAFVT…VEVVNEISAK (231 aa)). Residues 388–450 (KAYEGKIEEV…NSFSLTGEEI (63 aa)) enclose the TRAM domain.

It belongs to the methylthiotransferase family. MiaB subfamily. In terms of assembly, monomer. The cofactor is [4Fe-4S] cluster.

Its subcellular location is the cytoplasm. The catalysed reaction is N(6)-dimethylallyladenosine(37) in tRNA + (sulfur carrier)-SH + AH2 + 2 S-adenosyl-L-methionine = 2-methylsulfanyl-N(6)-dimethylallyladenosine(37) in tRNA + (sulfur carrier)-H + 5'-deoxyadenosine + L-methionine + A + S-adenosyl-L-homocysteine + 2 H(+). In terms of biological role, catalyzes the methylthiolation of N6-(dimethylallyl)adenosine (i(6)A), leading to the formation of 2-methylthio-N6-(dimethylallyl)adenosine (ms(2)i(6)A) at position 37 in tRNAs that read codons beginning with uridine. The sequence is that of tRNA-2-methylthio-N(6)-dimethylallyladenosine synthase from Clostridium botulinum (strain Langeland / NCTC 10281 / Type F).